The following is a 292-amino-acid chain: Probable septum site-determining protein MinC (292 aa).

The disordered stretch occupies residues aspartate 112–threonine 188. Residues glutamate 128 to alanine 137 are compositionally biased toward low complexity. Residues glutamine 140–aspartate 150 are compositionally biased toward acidic residues. Residues alanine 171–leucine 185 are compositionally biased toward polar residues.

Belongs to the MinC family. As to quaternary structure, interacts with MinD and FtsZ.

In terms of biological role, cell division inhibitor that blocks the formation of polar Z ring septums. Rapidly oscillates between the poles of the cell to destabilize FtsZ filaments that have formed before they mature into polar Z rings. Prevents FtsZ polymerization. The chain is Probable septum site-determining protein MinC from Bordetella bronchiseptica (strain ATCC BAA-588 / NCTC 13252 / RB50) (Alcaligenes bronchisepticus).